Consider the following 235-residue polypeptide: tRNA (guanine-N(1)-)-methyltransferase (235 aa).

Residues glycine 112 and 131 to 136 (LGDFVL) contribute to the S-adenosyl-L-methionine site.

Belongs to the RNA methyltransferase TrmD family. Homodimer.

The protein resides in the cytoplasm. It catalyses the reaction guanosine(37) in tRNA + S-adenosyl-L-methionine = N(1)-methylguanosine(37) in tRNA + S-adenosyl-L-homocysteine + H(+). In terms of biological role, specifically methylates guanosine-37 in various tRNAs. In Synechococcus elongatus (strain ATCC 33912 / PCC 7942 / FACHB-805) (Anacystis nidulans R2), this protein is tRNA (guanine-N(1)-)-methyltransferase.